Consider the following 454-residue polypeptide: tRNA modification GTPase MnmE (454 aa).

(6S)-5-formyl-5,6,7,8-tetrahydrofolate contacts are provided by R23, E86, and R125. The TrmE-type G domain occupies 221 to 376 (GLTLAIVGRP…LREQILRMVS (156 aa)). N231 is a K(+) binding site. GTP is bound by residues 231–236 (NVGKSS), 250–256 (TAIPGTT), and 275–278 (DTAG). Position 235 (S235) interacts with Mg(2+). Positions 250, 252, and 255 each coordinate K(+). Mg(2+) is bound at residue T256. Residue K454 participates in (6S)-5-formyl-5,6,7,8-tetrahydrofolate binding.

The protein belongs to the TRAFAC class TrmE-Era-EngA-EngB-Septin-like GTPase superfamily. TrmE GTPase family. Homodimer. Heterotetramer of two MnmE and two MnmG subunits. K(+) serves as cofactor.

The protein localises to the cytoplasm. In terms of biological role, exhibits a very high intrinsic GTPase hydrolysis rate. Involved in the addition of a carboxymethylaminomethyl (cmnm) group at the wobble position (U34) of certain tRNAs, forming tRNA-cmnm(5)s(2)U34. The protein is tRNA modification GTPase MnmE of Koribacter versatilis (strain Ellin345).